The following is a 209-amino-acid chain: Uracil phosphoribosyltransferase (209 aa).

5-phospho-alpha-D-ribose 1-diphosphate-binding positions include Arg-79, Arg-104, and 131–139; that span reads DPMLATGGS. Uracil contacts are provided by residues Ile-194 and 199–201; that span reads GDA. Position 200 (Asp-200) interacts with 5-phospho-alpha-D-ribose 1-diphosphate.

This sequence belongs to the UPRTase family. Mg(2+) serves as cofactor.

It carries out the reaction UMP + diphosphate = 5-phospho-alpha-D-ribose 1-diphosphate + uracil. It functions in the pathway pyrimidine metabolism; UMP biosynthesis via salvage pathway; UMP from uracil: step 1/1. Its activity is regulated as follows. Allosterically activated by GTP. In terms of biological role, catalyzes the conversion of uracil and 5-phospho-alpha-D-ribose 1-diphosphate (PRPP) to UMP and diphosphate. The sequence is that of Uracil phosphoribosyltransferase from Brevibacillus brevis (strain 47 / JCM 6285 / NBRC 100599).